A 159-amino-acid polypeptide reads, in one-letter code: Siroheme decarboxylase beta subunit (159 aa).

Residue 152–157 (KTSMTY) participates in substrate binding.

Belongs to the Ahb/Nir family. Forms a heterodimer composed of AhbA and AhbB.

The catalysed reaction is siroheme + 2 H(+) = 12,18-didecarboxysiroheme + 2 CO2. It participates in porphyrin-containing compound metabolism; protoheme biosynthesis. Functionally, involved in siroheme-dependent heme b biosynthesis. Catalyzes the decarboxylation of siroheme into didecarboxysiroheme. Siroheme is decarboxylated to monodecarboxysiroheme, which is in turn decarboxylated to didecarboxysiroheme. The polypeptide is Siroheme decarboxylase beta subunit (Desulfovibrio desulfuricans (strain ATCC 27774 / DSM 6949 / MB)).